The primary structure comprises 510 residues: 2-isopropylmalate synthase (510 aa).

A Pyruvate carboxyltransferase domain is found at 4-266; sequence IQVFDTTLRD…ETNLKLDETK (263 aa). Mn(2+) is bound by residues D13, H201, H203, and N237. Residues 390–510 are regulatory domain; the sequence is QVETLQLQFV…DTARKDGVVS (121 aa).

The protein belongs to the alpha-IPM synthase/homocitrate synthase family. LeuA type 1 subfamily. Homodimer. The cofactor is Mn(2+).

Its subcellular location is the cytoplasm. The catalysed reaction is 3-methyl-2-oxobutanoate + acetyl-CoA + H2O = (2S)-2-isopropylmalate + CoA + H(+). The protein operates within amino-acid biosynthesis; L-leucine biosynthesis; L-leucine from 3-methyl-2-oxobutanoate: step 1/4. In terms of biological role, catalyzes the condensation of the acetyl group of acetyl-CoA with 3-methyl-2-oxobutanoate (2-ketoisovalerate) to form 3-carboxy-3-hydroxy-4-methylpentanoate (2-isopropylmalate). In Staphylococcus carnosus (strain TM300), this protein is 2-isopropylmalate synthase.